We begin with the raw amino-acid sequence, 423 residues long: Serine--tRNA ligase 2 (423 aa).

231–233 serves as a coordination point for L-serine; it reads TAE. 262–264 is a binding site for ATP; it reads RSE. Residue Glu285 participates in L-serine binding. An ATP-binding site is contributed by 349 to 352; sequence EISS. Ser384 serves as a coordination point for L-serine.

Belongs to the class-II aminoacyl-tRNA synthetase family. Type-1 seryl-tRNA synthetase subfamily. In terms of assembly, homodimer. The tRNA molecule binds across the dimer.

It localises to the cytoplasm. It catalyses the reaction tRNA(Ser) + L-serine + ATP = L-seryl-tRNA(Ser) + AMP + diphosphate + H(+). The enzyme catalyses tRNA(Sec) + L-serine + ATP = L-seryl-tRNA(Sec) + AMP + diphosphate + H(+). Its pathway is aminoacyl-tRNA biosynthesis; selenocysteinyl-tRNA(Sec) biosynthesis; L-seryl-tRNA(Sec) from L-serine and tRNA(Sec): step 1/1. Catalyzes the attachment of serine to tRNA(Ser). Is also able to aminoacylate tRNA(Sec) with serine, to form the misacylated tRNA L-seryl-tRNA(Sec), which will be further converted into selenocysteinyl-tRNA(Sec). This is Serine--tRNA ligase 2 from Enterococcus faecalis (strain ATCC 700802 / V583).